The sequence spans 452 residues: Bifunctional protein GlmU (452 aa).

The tract at residues 1 to 226 is pyrophosphorylase; that stretch reads MSLAVVILAA…GWEVDGVNDR (226 aa). UDP-N-acetyl-alpha-D-glucosamine is bound by residues 8-11, K22, Q73, 78-79, 99-101, G136, E151, N166, and N224; these read LAAG, GT, and YGD. D101 contributes to the Mg(2+) binding site. N224 lines the Mg(2+) pocket. Positions 227 to 247 are linker; sequence VQLARLERIYQQAQAETLMRD. The segment at 248–452 is N-acetyltransferase; sequence GVTLLDPSRL…VANWQRPKKG (205 aa). 2 residues coordinate UDP-N-acetyl-alpha-D-glucosamine: R330 and K348. The Proton acceptor role is filled by H360. The UDP-N-acetyl-alpha-D-glucosamine site is built by Y363 and N374. Acetyl-CoA-binding positions include A377, 383–384, S402, A420, and R437; that span reads NY.

It in the N-terminal section; belongs to the N-acetylglucosamine-1-phosphate uridyltransferase family. This sequence in the C-terminal section; belongs to the transferase hexapeptide repeat family. Homotrimer. Mg(2+) is required as a cofactor.

The protein localises to the cytoplasm. The catalysed reaction is alpha-D-glucosamine 1-phosphate + acetyl-CoA = N-acetyl-alpha-D-glucosamine 1-phosphate + CoA + H(+). It catalyses the reaction N-acetyl-alpha-D-glucosamine 1-phosphate + UTP + H(+) = UDP-N-acetyl-alpha-D-glucosamine + diphosphate. Its pathway is nucleotide-sugar biosynthesis; UDP-N-acetyl-alpha-D-glucosamine biosynthesis; N-acetyl-alpha-D-glucosamine 1-phosphate from alpha-D-glucosamine 6-phosphate (route II): step 2/2. It participates in nucleotide-sugar biosynthesis; UDP-N-acetyl-alpha-D-glucosamine biosynthesis; UDP-N-acetyl-alpha-D-glucosamine from N-acetyl-alpha-D-glucosamine 1-phosphate: step 1/1. It functions in the pathway bacterial outer membrane biogenesis; LPS lipid A biosynthesis. In terms of biological role, catalyzes the last two sequential reactions in the de novo biosynthetic pathway for UDP-N-acetylglucosamine (UDP-GlcNAc). The C-terminal domain catalyzes the transfer of acetyl group from acetyl coenzyme A to glucosamine-1-phosphate (GlcN-1-P) to produce N-acetylglucosamine-1-phosphate (GlcNAc-1-P), which is converted into UDP-GlcNAc by the transfer of uridine 5-monophosphate (from uridine 5-triphosphate), a reaction catalyzed by the N-terminal domain. This is Bifunctional protein GlmU from Alcanivorax borkumensis (strain ATCC 700651 / DSM 11573 / NCIMB 13689 / SK2).